Here is a 539-residue protein sequence, read N- to C-terminus: Dopamine receptor 2 (539 aa).

Topologically, residues 1 to 113 are extracellular; sequence MVDDNGSSPE…LPNDRVGLLA (113 aa). Asn5, Asn31, Asn47, and Asn68 each carry an N-linked (GlcNAc...) asparagine glycan. Residues 114–134 form a helical membrane-spanning segment; that stretch reads FLFLFSFATVFGNSLVILAVI. Residues 135–145 lie on the Cytoplasmic side of the membrane; sequence RERYLHTATNY. Residues 146-166 form a helical membrane-spanning segment; it reads FITSLAVADCLVGLVVMPFSA. Residues 167–189 lie on the Extracellular side of the membrane; the sequence is LYEVLENTWFFGTDWCDIWRSLD. A disulfide bridge connects residues Cys182 and Cys261. Residues 190 to 206 form a helical membrane-spanning segment; that stretch reads VLFSTASILNLCVISLD. Residues 207–227 are Cytoplasmic-facing; the sequence is RYWAITDPFSYPMRMTVKRAA. The chain crosses the membrane as a helical span at residues 228–248; that stretch reads GLIAAVWICSSAISFPAIVWW. The Extracellular segment spans residues 249 to 266; the sequence is RAARDGEMPAYKCTFTEH. The helical transmembrane segment at 267-287 threads the bilayer; that stretch reads LGYLVFSSTISFYLPLLVMVF. The Cytoplasmic segment spans residues 288 to 420; sequence TYCRIYRAAV…FAKEKKAAKT (133 aa). Positions 326–387 are disordered; that stretch reads GGTTRDQQNQ…EPDDEPLSAL (62 aa). The segment covering 337–352 has biased composition (gly residues); sequence SGGGGGGGGGGGGGGS. The span at 356–367 shows a compositional bias: basic residues; that stretch reads SHSHSHHHHHNH. Residues 421-441 traverse the membrane as a helical segment; sequence LGIVMGVFIICWLPFFVVNLL. Residues 442–453 lie on the Extracellular side of the membrane; that stretch reads SGFCIECIEHEE. A helical membrane pass occupies residues 454-474; it reads IVSAIVTWLGWINSCMNPVIY. Residues 475-539 are Cytoplasmic-facing; that stretch reads ACWSRDFRRA…RHNSCEQTYI (65 aa). Residues Cys492 and Cys493 are each lipidated (S-palmitoyl cysteine).

The protein belongs to the G-protein coupled receptor 1 family. In terms of tissue distribution, expressed in both central and peripheral nervous systems.

The protein resides in the cell membrane. Receptor for dopamine. The activity of this receptor is mediated by G proteins which activate adenylyl cyclase. Also capable of generating a calcium signal. In terms of antagonist responses, would be classed with the D1-like dopamine receptor group. This receptor is an attractive candidate for initiating biochemical cascades underlying olfactory learning. The protein is Dopamine receptor 2 (Dop1R2) of Drosophila melanogaster (Fruit fly).